A 274-amino-acid chain; its full sequence is Pyrogallol hydroxytransferase small subunit (274 aa).

[4Fe-4S] cluster contacts are provided by cysteine 13, cysteine 16, cysteine 19, cysteine 23, cysteine 68, cysteine 71, cysteine 76, cysteine 109, cysteine 126, cysteine 129, cysteine 145, and cysteine 149.

Heterodimer of a large and a small subunit. It depends on [4Fe-4S] cluster as a cofactor.

It catalyses the reaction 1,2,3,5-tetrahydroxybenzene + 1,2,3-trihydroxybenzene = 1,2,3,5-tetrahydroxybenzene + 1,3,5-trihydroxybenzene. In terms of biological role, isomerization of pyrogallol to phloroglucin. This chain is Pyrogallol hydroxytransferase small subunit (bthL), found in Pelobacter acidigallici.